The primary structure comprises 81 residues: MENVLGFVALAAGLIIGLGAIGACIGIGIMGSKYLEASARQPELMNALQTKMFLLAGLIDAAFLIGVGIAMMFAFANPFQL.

Transmembrane regions (helical) follow at residues Phe7 to Ile27 and Phe53 to Phe73.

It belongs to the ATPase C chain family. F-type ATPases have 2 components, F(1) - the catalytic core - and F(0) - the membrane proton channel. F(1) has five subunits: alpha(3), beta(3), gamma(1), delta(1), epsilon(1). F(0) has three main subunits: a(1), b(2) and c(10-14). The alpha and beta chains form an alternating ring which encloses part of the gamma chain. F(1) is attached to F(0) by a central stalk formed by the gamma and epsilon chains, while a peripheral stalk is formed by the delta and b chains.

The protein localises to the cell inner membrane. Its function is as follows. F(1)F(0) ATP synthase produces ATP from ADP in the presence of a proton or sodium gradient. F-type ATPases consist of two structural domains, F(1) containing the extramembraneous catalytic core and F(0) containing the membrane proton channel, linked together by a central stalk and a peripheral stalk. During catalysis, ATP synthesis in the catalytic domain of F(1) is coupled via a rotary mechanism of the central stalk subunits to proton translocation. In terms of biological role, key component of the F(0) channel; it plays a direct role in translocation across the membrane. A homomeric c-ring of between 10-14 subunits forms the central stalk rotor element with the F(1) delta and epsilon subunits. This chain is ATP synthase subunit c, found in Azoarcus sp. (strain BH72).